Consider the following 395-residue polypeptide: MAKRQVQKETRSQPHFLQFNNLACETAGGKVIFATDEWFAPARNLLKRDPPEFIASAFTEFGKWMDGWETRRKRIPGHDWCIVQLGVPGIIHGFDVDTSFFTGNYAPFASIQATCLDQMPSIALEGDRTGMAASPSQFEAVAQLNSDSWKEVVPVTKLKAGYSDTCHNYLSVSYPHRVTHIRFNIYPDGGIARLKVYGIGKKDWSSVFGQDLVDLVALVNGGVCVGFSDAHYGHPRNMIGLGMAENMGDGWETARRLDRPRVLKEDENGILQVPGSEWAIFRLGHPGIISKIELDTNHFKGNFPDSCRIEACSLTEDEENSFIQSQWSSDRSPMWNILLPPQKMKAHHRHVFSGPSLVHCGPVSHVRMVIAPDGGISRLRIWGRPVSSHQMISKL.

This sequence belongs to the allantoicase family.

It catalyses the reaction allantoate + H2O = (S)-ureidoglycolate + urea. Its pathway is nitrogen metabolism; (S)-allantoin degradation; (S)-ureidoglycolate from allantoate (aminidohydrolase route): step 1/1. In terms of biological role, utilization of purines as secondary nitrogen sources, when primary sources are limiting. In Danio rerio (Zebrafish), this protein is Allantoicase (allc).